A 362-amino-acid polypeptide reads, in one-letter code: Peptide chain release factor 1 (362 aa).

Gln-235 is subject to N5-methylglutamine.

The protein belongs to the prokaryotic/mitochondrial release factor family. Methylated by PrmC. Methylation increases the termination efficiency of RF1.

Its subcellular location is the cytoplasm. Its function is as follows. Peptide chain release factor 1 directs the termination of translation in response to the peptide chain termination codons UAG and UAA. This chain is Peptide chain release factor 1, found in Acinetobacter baumannii (strain AYE).